A 341-amino-acid chain; its full sequence is Methionine import ATP-binding protein MetN (341 aa).

The ABC transporter domain maps to 2–241 (IELNQVVKRY…PQHEVTRRFV (240 aa)). 38–45 (GFSGAGKS) is an ATP binding site.

This sequence belongs to the ABC transporter superfamily. Methionine importer (TC 3.A.1.24) family. The complex is composed of two ATP-binding proteins (MetN), two transmembrane proteins (MetI) and a solute-binding protein (MetQ).

Its subcellular location is the cell membrane. It catalyses the reaction L-methionine(out) + ATP + H2O = L-methionine(in) + ADP + phosphate + H(+). The enzyme catalyses D-methionine(out) + ATP + H2O = D-methionine(in) + ADP + phosphate + H(+). Functionally, part of the ABC transporter complex MetNIQ involved in methionine import. Responsible for energy coupling to the transport system. This chain is Methionine import ATP-binding protein MetN, found in Staphylococcus haemolyticus (strain JCSC1435).